Reading from the N-terminus, the 481-residue chain is Aspartyl/glutamyl-tRNA(Asn/Gln) amidotransferase subunit B (481 aa).

It belongs to the GatB/GatE family. GatB subfamily. Heterotrimer of A, B and C subunits.

It catalyses the reaction L-glutamyl-tRNA(Gln) + L-glutamine + ATP + H2O = L-glutaminyl-tRNA(Gln) + L-glutamate + ADP + phosphate + H(+). It carries out the reaction L-aspartyl-tRNA(Asn) + L-glutamine + ATP + H2O = L-asparaginyl-tRNA(Asn) + L-glutamate + ADP + phosphate + 2 H(+). Functionally, allows the formation of correctly charged Asn-tRNA(Asn) or Gln-tRNA(Gln) through the transamidation of misacylated Asp-tRNA(Asn) or Glu-tRNA(Gln) in organisms which lack either or both of asparaginyl-tRNA or glutaminyl-tRNA synthetases. The reaction takes place in the presence of glutamine and ATP through an activated phospho-Asp-tRNA(Asn) or phospho-Glu-tRNA(Gln). This is Aspartyl/glutamyl-tRNA(Asn/Gln) amidotransferase subunit B from Ehrlichia chaffeensis (strain ATCC CRL-10679 / Arkansas).